A 192-amino-acid chain; its full sequence is Phosphoheptose isomerase (192 aa).

The region spanning 37–192 (LADSFKAGGK…IQLIEKEMEK (156 aa)) is the SIS domain. 52-54 (NGG) is a substrate binding site. Zn(2+) is bound by residues histidine 61 and glutamate 65. Substrate contacts are provided by residues glutamate 65, 93–94 (ND), 119–121 (STS), serine 124, and glutamine 172. Zn(2+)-binding residues include glutamine 172 and histidine 180.

It belongs to the SIS family. GmhA subfamily. Homotetramer. Requires Zn(2+) as cofactor.

The protein resides in the cytoplasm. It catalyses the reaction 2 D-sedoheptulose 7-phosphate = D-glycero-alpha-D-manno-heptose 7-phosphate + D-glycero-beta-D-manno-heptose 7-phosphate. It participates in carbohydrate biosynthesis; D-glycero-D-manno-heptose 7-phosphate biosynthesis; D-glycero-alpha-D-manno-heptose 7-phosphate and D-glycero-beta-D-manno-heptose 7-phosphate from sedoheptulose 7-phosphate: step 1/1. Functionally, catalyzes the isomerization of sedoheptulose 7-phosphate in D-glycero-D-manno-heptose 7-phosphate. The chain is Phosphoheptose isomerase from Proteus mirabilis (strain HI4320).